Consider the following 1906-residue polypeptide: Zinc metalloprotease ZmpB (1906 aa).

The first 33 residues, 1 to 33 (MFKKDRFSIRKIKGVVGSVFLGSLLMAPSVVDA), serve as a signal peptide directing secretion. Positions 34–76 (ATYHYVNKEIISQEAKDLIQTGKPDRNEVVYGLVYQKDQLPQT) are excised as a propeptide. The LPXTG sorting signal signature appears at 73 to 77 (LPQTG). T76 carries the pentaglycyl murein peptidoglycan amidated threonine modification. The next 2 membrane-spanning stretches (helical) occupy residues 77 to 98 (GTEA…LLIY) and 105 to 127 (SVFL…DPVA). Over 128-1906 (TLALASREGV…TNSFKTSIFK (1779 aa)) the chain is Extracellular. Positions 178–436 (VETPQSITNQ…KASSVSPTDY (259 aa)) are disordered. Residues 181–196 (PQSITNQEQARTENQV) show a composition bias toward polar residues. Basic and acidic residues-rich tracts occupy residues 201 to 239 (EAPK…KEDS), 252 to 262 (VESKPEEKVAV), 271 to 335 (KPAE…KEET), 352 to 375 (KQTE…REDE), and 383 to 408 (EPEK…DKIK). Repeat copies occupy residues 277–291 (KVEQ…REDE), 293–315 (APVE…ETPK), 361–375 (KVEQ…REDE), and 380–402 (APVE…ETPK). The tract at residues 277–375 (KVEQAGEPVA…GEPVAPREDE (99 aa)) is 2 X 15 AA repeats of K-V-E-Q-A-G-E-P-V-A-P-R-E-D-E. The 2 X 23 AA approximate repeats stretch occupies residues 293–375 (APVEPEKQPE…GEPVAPREDE (83 aa)). The segment covering 421-436 (LNNQIDKASSVSPTDY) has biased composition (polar residues). Residue H1562 coordinates Zn(2+). Residue E1563 is part of the active site. Positions 1566 and 1586 each coordinate Zn(2+).

This sequence belongs to the peptidase M26 family. The cofactor is Zn(2+). Post-translationally, the Gram-positive cell-wall anchor motif LPXTG is located in the N-terminal part, in contrast to such motifs in other known streptococcal and staphylococcal proteins. The protease could be cleaved by the sortase and anchored in the membrane via the two potential N-terminal transmembrane domains, whereas the propeptide located prior to the LPXTG motif would remain attached to the cell wall peptidoglycan by an amide bond.

It localises to the secreted. It is found in the cell wall. The protein resides in the membrane. Is a virulence factor capable of inducing inflammation in the lower respiratory tract, by increasing tumor necrosis factor alpha (TNF-alpha) concentration in the lungs. Also appears to have other functions important in virulence in models of pneumonia and septicemia. This is Zinc metalloprotease ZmpB (zmpB) from Streptococcus pneumoniae serotype 4 (strain ATCC BAA-334 / TIGR4).